We begin with the raw amino-acid sequence, 396 residues long: Probable splicing factor YJU2B (396 aa).

Residues 1-26 (MGERKGVNKYYPPDFNPEKHGSLNRY) are disordered. S40 is modified (phosphoserine). Positions 182–214 (LNSMLRRRFREKKKAIQEEEERDQALQAKASLT) form a coiled coil. The interval 295 to 396 (IVRRRSRDVP…VADYSDSESE (102 aa)) is disordered. S306 carries the post-translational modification Phosphoserine. Residues 315–327 (KSGEPRVPEEAAQ) show a composition bias toward basic and acidic residues. Polar residues predominate over residues 340 to 350 (TTETPKCSSPR). A Phosphoserine modification is found at S362.

It belongs to the CWC16 family.

It localises to the nucleus. May be involved in mRNA splicing. The polypeptide is Probable splicing factor YJU2B (Homo sapiens (Human)).